The primary structure comprises 557 residues: Dihydroxy-acid dehydratase (557 aa).

Asp78 contacts Mg(2+). Position 119 (Cys119) interacts with [2Fe-2S] cluster. Mg(2+) contacts are provided by Asp120 and Lys121. Lys121 is modified (N6-carboxylysine). Residue Cys192 coordinates [2Fe-2S] cluster. Residue Glu442 coordinates Mg(2+). Residue Ser468 is the Proton acceptor of the active site.

This sequence belongs to the IlvD/Edd family. In terms of assembly, homodimer. It depends on [2Fe-2S] cluster as a cofactor. Mg(2+) is required as a cofactor.

The catalysed reaction is (2R)-2,3-dihydroxy-3-methylbutanoate = 3-methyl-2-oxobutanoate + H2O. It catalyses the reaction (2R,3R)-2,3-dihydroxy-3-methylpentanoate = (S)-3-methyl-2-oxopentanoate + H2O. Its pathway is amino-acid biosynthesis; L-isoleucine biosynthesis; L-isoleucine from 2-oxobutanoate: step 3/4. The protein operates within amino-acid biosynthesis; L-valine biosynthesis; L-valine from pyruvate: step 3/4. Functionally, functions in the biosynthesis of branched-chain amino acids. Catalyzes the dehydration of (2R,3R)-2,3-dihydroxy-3-methylpentanoate (2,3-dihydroxy-3-methylvalerate) into 2-oxo-3-methylpentanoate (2-oxo-3-methylvalerate) and of (2R)-2,3-dihydroxy-3-methylbutanoate (2,3-dihydroxyisovalerate) into 2-oxo-3-methylbutanoate (2-oxoisovalerate), the penultimate precursor to L-isoleucine and L-valine, respectively. This is Dihydroxy-acid dehydratase from Bacillus cereus (strain ZK / E33L).